Consider the following 244-residue polypeptide: Phosphoadenosine 5'-phosphosulfate reductase (244 aa).

Cys-239 serves as the catalytic Nucleophile; cysteine thiosulfonate intermediate.

This sequence belongs to the PAPS reductase family. CysH subfamily.

It is found in the cytoplasm. It catalyses the reaction [thioredoxin]-disulfide + sulfite + adenosine 3',5'-bisphosphate + 2 H(+) = [thioredoxin]-dithiol + 3'-phosphoadenylyl sulfate. It functions in the pathway sulfur metabolism; hydrogen sulfide biosynthesis; sulfite from sulfate: step 3/3. Its function is as follows. Catalyzes the formation of sulfite from phosphoadenosine 5'-phosphosulfate (PAPS) using thioredoxin as an electron donor. This Buchnera aphidicola subsp. Acyrthosiphon pisum (strain Tuc7) protein is Phosphoadenosine 5'-phosphosulfate reductase.